The sequence spans 344 residues: Phosphate acyltransferase (344 aa).

Belongs to the PlsX family. In terms of assembly, homodimer. Probably interacts with PlsY.

The protein resides in the cytoplasm. The catalysed reaction is a fatty acyl-[ACP] + phosphate = an acyl phosphate + holo-[ACP]. It participates in lipid metabolism; phospholipid metabolism. Catalyzes the reversible formation of acyl-phosphate (acyl-PO(4)) from acyl-[acyl-carrier-protein] (acyl-ACP). This enzyme utilizes acyl-ACP as fatty acyl donor, but not acyl-CoA. This is Phosphate acyltransferase from Thermosynechococcus vestitus (strain NIES-2133 / IAM M-273 / BP-1).